We begin with the raw amino-acid sequence, 393 residues long: Reticulon-like protein 2 (393 aa).

The segment covering 1–21 has biased composition (low complexity); the sequence is MNRNTTTNKNANLNNSRNANA. The tract at residues 1 to 25 is disordered; sequence MNRNTTTNKNANLNNSRNANAPGEA. The Cytoplasmic segment spans residues 1–60; that stretch reads MNRNTTTNKNANLNNSRNANAPGEAGHQNKTGLIYWTNPSKSGASFAATLVSLLILRNVN. Positions 30–236 constitute a Reticulon domain; that stretch reads KTGLIYWTNP…SISNENKSST (207 aa). The helical transmembrane segment at 61–81 threads the bilayer; it reads VISVLLKIGYMVLFTSFAVEL. Topologically, residues 82–149 are lumenal; the sequence is STKVLFDKGV…IGVSLYFLHG (68 aa). A glycan (N-linked (GlcNAc...) asparagine) is linked at N137. The chain crosses the membrane as a helical span at residues 150 to 170; it reads LFAIFSMNTVLIMTTIFLYTV. Over 171–393 the chain is Cytoplasmic; the sequence is PLIYDRKQAR…HGLKQKLQHA (223 aa). Disordered stretches follow at residues 214-313 and 339-393; these read IIPP…DVKT and GDYN…LQHA. Positions 220-285 are enriched in polar residues; sequence DEGSYSTSIS…PVSQNENIGT (66 aa). At S278 the chain carries Phosphoserine. Basic and acidic residues predominate over residues 289-313; sequence GKQEIPTEKDFNNRHENFSKPDVKT. A compositionally biased stretch (polar residues) spans 365-376; sequence PAESQSIPIKNN. Over residues 381–393 the composition is skewed to basic residues; the sequence is KTTHGLKQKLQHA.

It localises to the endoplasmic reticulum membrane. The protein is Reticulon-like protein 2 (RTN2) of Saccharomyces cerevisiae (strain ATCC 204508 / S288c) (Baker's yeast).